The chain runs to 318 residues: tRNA uridine(34) hydroxylase (318 aa).

The Rhodanese domain maps to 123–217; the sequence is EDDDTVIIDA…YGKDPETKGE (95 aa). Catalysis depends on Cys177, which acts as the Cysteine persulfide intermediate.

Belongs to the TrhO family.

The enzyme catalyses uridine(34) in tRNA + AH2 + O2 = 5-hydroxyuridine(34) in tRNA + A + H2O. Its function is as follows. Catalyzes oxygen-dependent 5-hydroxyuridine (ho5U) modification at position 34 in tRNAs. This Staphylococcus aureus (strain MSSA476) protein is tRNA uridine(34) hydroxylase.